The sequence spans 249 residues: Small ribosomal subunit protein uS2 (249 aa).

This sequence belongs to the universal ribosomal protein uS2 family.

This Listeria monocytogenes serovar 1/2a (strain ATCC BAA-679 / EGD-e) protein is Small ribosomal subunit protein uS2.